Reading from the N-terminus, the 165-residue chain is ATP synthase subunit b (165 aa).

A helical membrane pass occupies residues 10–30; the sequence is LIFWMLLSFGIVFAVLAKYGF.

This sequence belongs to the ATPase B chain family. F-type ATPases have 2 components, F(1) - the catalytic core - and F(0) - the membrane proton channel. F(1) has five subunits: alpha(3), beta(3), gamma(1), delta(1), epsilon(1). F(0) has three main subunits: a(1), b(2) and c(10-14). The alpha and beta chains form an alternating ring which encloses part of the gamma chain. F(1) is attached to F(0) by a central stalk formed by the gamma and epsilon chains, while a peripheral stalk is formed by the delta and b chains.

Its subcellular location is the cell inner membrane. In terms of biological role, f(1)F(0) ATP synthase produces ATP from ADP in the presence of a proton or sodium gradient. F-type ATPases consist of two structural domains, F(1) containing the extramembraneous catalytic core and F(0) containing the membrane proton channel, linked together by a central stalk and a peripheral stalk. During catalysis, ATP synthesis in the catalytic domain of F(1) is coupled via a rotary mechanism of the central stalk subunits to proton translocation. Component of the F(0) channel, it forms part of the peripheral stalk, linking F(1) to F(0). The protein is ATP synthase subunit b of Bacteroides fragilis (strain ATCC 25285 / DSM 2151 / CCUG 4856 / JCM 11019 / LMG 10263 / NCTC 9343 / Onslow / VPI 2553 / EN-2).